The primary structure comprises 113 residues: Heavy metal-associated isoprenylated plant protein 15 (113 aa).

Residues 1–65 (MIVWMGVYDQ…KWGKAKLTLY (65 aa)) enclose the HMA domain. The stretch at 69–89 (DALKEAKIAEAKQKREEIERE) forms a coiled coil. A Cysteine methyl ester modification is found at cysteine 110. Cysteine 110 is lipidated: S-farnesyl cysteine. Residues 111–113 (VIC) constitute a propeptide, removed in mature form.

It belongs to the HIPP family. Expressed in embryo sacs.

Probable heavy-metal-binding protein. This Arabidopsis thaliana (Mouse-ear cress) protein is Heavy metal-associated isoprenylated plant protein 15.